Here is a 353-residue protein sequence, read N- to C-terminus: CCN family member 3 (353 aa).

The first 26 residues, 1-26 (MEPGGGHSLPVLLLLLLLLLLRPSEV), serve as a signal peptide directing secretion. One can recognise an IGFBP N-terminal domain in the interval 29-103 (REAPCPRPCG…GGGTGICMVL (75 aa)). 6 disulfide bridges follow: Cys33-Cys59, Cys37-Cys61, Cys41-Cys62, Cys48-Cys65, Cys73-Cys87, and Cys79-Cys100. The VWFC domain occupies 106 to 172 (DNCVFDGMIY…GECCEKWVCE (67 aa)). A TSP type-1 domain is found at 203–248 (NCIEQTTEWSACSRSCGMGFSTRVTNRNQQCEMVKQTRLCMMRPCE). Disulfide bonds link Cys260–Cys297, Cys277–Cys311, Cys288–Cys327, Cys291–Cys329, and Cys296–Cys333. The CTCK domain occupies 260–334 (CIRTKKSMKA…NTCVCHGNCP (75 aa)). Asn276 carries an N-linked (GlcNAc...) asparagine glycan.

The protein belongs to the CCN family.

It is found in the secreted. Its subcellular location is the cytoplasm. The protein localises to the cell junction. It localises to the gap junction. Immediate-early protein likely to play a role in cell growth regulation. In Coturnix japonica (Japanese quail), this protein is CCN family member 3 (CCN3).